We begin with the raw amino-acid sequence, 485 residues long: Probable L-xylulose kinase (485 aa).

This sequence belongs to the FGGY kinase family. Homodimer.

The enzyme catalyses L-xylulose + ATP = L-xylulose 5-phosphate + ADP + H(+). This is Probable L-xylulose kinase (lyx) from Haemophilus influenzae (strain ATCC 51907 / DSM 11121 / KW20 / Rd).